We begin with the raw amino-acid sequence, 3685 residues long: Dystrophin (3685 aa).

Residues 1–240 (MLWWEEVEDC…YITSLFQVLP (240 aa)) form an actin-binding region. Calponin-homology (CH) domains lie at 15-119 (DVQK…LHWQ) and 134-240 (TNSE…QVLP). Positions 63–72 (PKEKGSTRVH) are ANK2- and ANK-3 binding. 24 Spectrin repeats span residues 339–447 (VNLD…NLHR), 448–556 (VLMD…LLQD), 559–667 (LKWQ…QISQ), 719–828 (EIRK…WLEY), 830–934 (NNII…ELQT), 943–1045 (RYQE…KLEE), 1048–1154 (NKLR…ALKG), 1157–1263 (EKTV…TLEE), 1266–1367 (ACWH…LLEQ), 1368–1463 (SIQS…LFQK), 1468–1568 (EQRL…QLEK), 1571–1676 (KLSR…LLLE), 1679–1778 (KHME…KASI), 1779–1874 (PLKE…KALE), 1877–1979 (HQWY…TVRE), 1992–2101 (EISY…RFDR), 2104–2208 (EKWR…RLEE), 2211–2318 (NILS…EIEA), 2319–2423 (QIKD…LRAK), 2475–2577 (FNRA…QLNE), 2580–2686 (KDST…ALEE), 2689–2802 (RLLQ…HLEA), 2808–2930 (KRLH…RKID), and 2935–3040 (RLRE…QLHE). Asn340 is modified (phosphothreonine). Phosphoserine is present on residues Tyr344 and Leu348. Phosphothreonine is present on residues Glu519, Ser616, and Ser629. An interaction with SYNM region spans residues 1415 to 1913 (SDLTSHEISL…PEPRDERKIK (499 aa)). Residues 3055–3088 (TSVQGPWERAISPNKVPYYINHETQTTCWDHPKM) enclose the WW domain. Residues 3058 to 3408 (QGPWERAISP…TVLEGDNMET (351 aa)) are interaction with SYNM. The ZZ-type; degenerate zinc-finger motif lies at 3308–3364 (KHQAKCNICKECPIIGFRYRSLKHFNYDICQSCFFSGRVAKGHKMHYPMVEYCTPTT). The Zn(2+) site is built by Cys3313, Cys3316, Cys3337, and Cys3340. A binds to SNTB1 region spans residues 3466–3518 (DDEHLLIQHYCQSLNQDSPLSQPRSPAQILISLESEERGELERILADLEEENR). 3 positions are modified to phosphoserine: Ser3483, Ser3490, and Ser3500. 2 disordered regions span residues 3528–3554 (KQQH…QSPR) and 3603–3685 (EAKV…EDTM). 2 stretches are compositionally biased toward polar residues: residues 3607–3626 (NGTT…SSQP) and 3662–3673 (QLNNSFPSSRGR). A phosphoserine mark is found at Ser3612, Ser3613, Ser3617, Ser3623, Ser3624, and Ser3666.

In terms of assembly, interacts with SYNM. Interacts with the syntrophins SNTA1, SNTB1, SNTB2, SNTG1 and SNTG2. Interacts with KRT19. Component of the dystrophin-associated glycoprotein complex which is composed of three subcomplexes: a cytoplasmic complex comprised of DMD (or UTRN), DTNA and a number of syntrophins, such as SNTB1, SNTB2, SNTG1 and SNTG2, the transmembrane dystroglycan complex, and the sarcoglycan-sarcospan complex. Interacts with DAG1 (betaDAG1) with DMD; the interaction is inhibited by phosphorylation on the PPXY motif of DAG1. Interacts with CMYA5. Directly interacts with ANK2 and ANK3; these interactions do not interfere with betaDAG1-binding and are necessary for proper localization in muscle cells. Identified in a dystroglycan complex that contains at least PRX, DRP2, UTRN, DMD and DAG1. Interacts with DTNB. Interacts with PGM5; the interaction is direct. Interacts with NOS1; localizes NOS1 to sarcolemma in muscle cells. As to expression, expressed in muscle fibers accumulating in the costameres of myoplasm at the sarcolemma. Expressed in brain, muscle, kidney, lung and testis. Most tissues contain transcripts of multiple isoforms. Isoform 15: Only isoform to be detected in heart and liver and is also expressed in brain, testis and hepatoma cells.

It localises to the cell membrane. It is found in the sarcolemma. The protein localises to the cytoplasm. The protein resides in the cytoskeleton. Its subcellular location is the postsynaptic cell membrane. Its function is as follows. Anchors the extracellular matrix to the cytoskeleton via F-actin. Ligand for dystroglycan. Component of the dystrophin-associated glycoprotein complex which accumulates at the neuromuscular junction (NMJ) and at a variety of synapses in the peripheral and central nervous systems and has a structural function in stabilizing the sarcolemma. Also implicated in signaling events and synaptic transmission. This Homo sapiens (Human) protein is Dystrophin.